A 511-amino-acid polypeptide reads, in one-letter code: Zinc finger CCCH-type with G patch domain-containing protein (511 aa).

Position 1 is an N-acetylmethionine (M1). S70 is modified (phosphoserine). The interval 92–129 (PGAPCNDSETAPGSEVQPGSTSSALEEEEEDPDLEELS) is disordered. The segment covering 98–115 (DSETAPGSEVQPGSTSSA) has biased composition (polar residues). Residues 116–127 (LEEEEEDPDLEE) are compositionally biased toward acidic residues. The C3H1-type zinc finger occupies 174–200 (KSLKPCPFFLEGKCRFKENCRFSHGQV). The interval 266-291 (PPLRTEATESSDSDTGDASDSSYARV) is disordered. At S276 the chain carries Phosphoserine. Residue T280 is modified to Phosphothreonine. The region spanning 313-359 (TRGIGSKLLVKMGYEFGKGLGRHAEGRVEPIHAVVLPRGKSLDQCAE) is the G-patch domain. S353 bears the Phosphoserine mark. Disordered stretches follow at residues 363–393 (KKTK…PPRN) and 490–511 (AQEA…MTEF). A compositionally biased stretch (basic and acidic residues) spans 491–511 (QEADLQRKQRKADTHRKMTEF).

As to quaternary structure, interacts with CHD4/Mi-2; the interaction is direct.

It localises to the nucleus. Its function is as follows. Transcription repressor that specifically binds the 5'-GGAG[GA]A[GA]A-3' consensus sequence. Represses transcription by recruiting the chromatin multiprotein complex NuRD to target promoters. Negatively regulates expression of EGFR, a gene involved in cell proliferation, survival and migration. Its ability to repress genes of the EGFR pathway suggest it may act as a tumor suppressor. In Mus musculus (Mouse), this protein is Zinc finger CCCH-type with G patch domain-containing protein (Zgpat).